A 283-amino-acid chain; its full sequence is uncharacterized protein (283 aa).

A signal peptide spans M1–A21. Residue C22 is the site of N-palmitoyl cysteine attachment. The S-diacylglycerol cysteine moiety is linked to residue C22.

This sequence belongs to the MG439/MG440 family.

Its subcellular location is the cell membrane. This is an uncharacterized protein from Mycoplasma pneumoniae (strain ATCC 29342 / M129 / Subtype 1) (Mycoplasmoides pneumoniae).